A 704-amino-acid chain; its full sequence is SH3KBP1-binding protein 1 (704 aa).

At A2 the chain carries N-acetylalanine. Residues 19-88 (EVIHLNVGGK…LRTKELDPRG (70 aa)) form the BTB domain. Residues 146–165 (VGPQQIGGRPAPVRRSNTMP) form a disordered region. At T163 the chain carries Phosphothreonine. WD repeat units follow at residues 233–280 (RLDW…GGSE), 283–322 (VFHL…WQVQ), 324–359 (VQPI…LRMK), 428–466 (VHRS…GMIS), and 548–586 (LECE…DGLG). The tract at residues 609 to 704 (PLTSSRASFP…PKNTLNETSF (96 aa)) is disordered. Low complexity predominate over residues 611–631 (TSSRASFPSPSPRTSLTSLHS). Positions 618 to 623 (PSPSPR) match the PXXXPR motif. Phosphoserine is present on residues S644 and S646. A PXXXPR motif is present at residues 678-683 (PTPAPR).

Belongs to the KCTD3 family. Monomer. Interacts with CUL3; interaction is direct and forms a 5:5 heterodecamer. Interacts (via PXXXPR motifs) with SH3KBP1 (via SH3 domains). Directly interacts with cathepsin B/CTSB.

It is found in the lysosome. In terms of biological role, inhibits CBL-SH3KBP1 complex mediated down-regulation of EGFR signaling by sequestration of SH3KBP1. Binds to SH3KBP1 and prevents its interaction with CBL and inhibits translocation of SH3KBP1 to EGFR containing vesicles upon EGF stimulation. The polypeptide is SH3KBP1-binding protein 1 (Shkbp1) (Rattus norvegicus (Rat)).